The sequence spans 184 residues: Large ribosomal subunit protein uL5 (184 aa).

Belongs to the universal ribosomal protein uL5 family. As to quaternary structure, part of the 50S ribosomal subunit; part of the 5S rRNA/L5/L18/L25 subcomplex. Contacts the 5S rRNA and the P site tRNA. Forms a bridge to the 30S subunit in the 70S ribosome.

Its function is as follows. This is one of the proteins that bind and probably mediate the attachment of the 5S RNA into the large ribosomal subunit, where it forms part of the central protuberance. In the 70S ribosome it contacts protein S13 of the 30S subunit (bridge B1b), connecting the 2 subunits; this bridge is implicated in subunit movement. Contacts the P site tRNA; the 5S rRNA and some of its associated proteins might help stabilize positioning of ribosome-bound tRNAs. The sequence is that of Large ribosomal subunit protein uL5 from Ureaplasma parvum serovar 3 (strain ATCC 27815 / 27 / NCTC 11736).